A 99-amino-acid polypeptide reads, in one-letter code: Small ribosomal subunit protein bS20 (99 aa).

It belongs to the bacterial ribosomal protein bS20 family.

In terms of biological role, binds directly to 16S ribosomal RNA. This Synechococcus sp. (strain CC9311) protein is Small ribosomal subunit protein bS20.